Consider the following 101-residue polypeptide: Small ribosomal subunit protein uS14 (101 aa).

Belongs to the universal ribosomal protein uS14 family. In terms of assembly, part of the 30S ribosomal subunit. Contacts proteins S3 and S10.

Its function is as follows. Binds 16S rRNA, required for the assembly of 30S particles and may also be responsible for determining the conformation of the 16S rRNA at the A site. The polypeptide is Small ribosomal subunit protein uS14 (Ehrlichia ruminantium (strain Welgevonden)).